The primary structure comprises 121 residues: Small ribosomal subunit protein bS6 (121 aa).

Belongs to the bacterial ribosomal protein bS6 family.

In terms of biological role, binds together with bS18 to 16S ribosomal RNA. In Pelagibacter ubique (strain HTCC1062), this protein is Small ribosomal subunit protein bS6.